A 387-amino-acid polypeptide reads, in one-letter code: Galactokinase (387 aa).

33–36 (EHTD) lines the substrate pocket. ATP contacts are provided by residues serine 67 and 124-130 (GSGLSSS). Residues serine 130 and glutamate 162 each coordinate Mg(2+). The Proton acceptor role is filled by aspartate 174. Position 224 (tyrosine 224) interacts with substrate.

The protein belongs to the GHMP kinase family. GalK subfamily.

The protein localises to the cytoplasm. It catalyses the reaction alpha-D-galactose + ATP = alpha-D-galactose 1-phosphate + ADP + H(+). The protein operates within carbohydrate metabolism; galactose metabolism. In terms of biological role, catalyzes the transfer of the gamma-phosphate of ATP to D-galactose to form alpha-D-galactose-1-phosphate (Gal-1-P). This chain is Galactokinase, found in Ligilactobacillus salivarius (strain UCC118) (Lactobacillus salivarius).